The following is a 372-amino-acid chain: NAD(P)H-quinone oxidoreductase subunit 1 (372 aa).

Helical transmembrane passes span 27 to 47 (LLWIPLPMLLVLVSAVIGVLV), 97 to 117 (VLFTVGPILVLVPVILSWLIV), 128 to 148 (VGIGIFLWIALSSIQPIGLLM), 166 to 186 (AAQSISYEIPLALAVLAIVMM), 204 to 224 (FLSWNIWRQPVGFIIFWICAL), 266 to 286 (VLSALLVSVLYLGGWGFPISI), 308 to 328 (SLGIVMTILKAYLLVFLAILL), and 347 to 367 (FLLPISLVNLLVTASLKLAFP).

This sequence belongs to the complex I subunit 1 family. In terms of assembly, NDH-1 is composed of at least 11 different subunits.

It is found in the cellular thylakoid membrane. The enzyme catalyses a plastoquinone + NADH + (n+1) H(+)(in) = a plastoquinol + NAD(+) + n H(+)(out). It carries out the reaction a plastoquinone + NADPH + (n+1) H(+)(in) = a plastoquinol + NADP(+) + n H(+)(out). NDH-1 shuttles electrons from an unknown electron donor, via FMN and iron-sulfur (Fe-S) centers, to quinones in the respiratory and/or the photosynthetic chain. The immediate electron acceptor for the enzyme in this species is believed to be plastoquinone. Couples the redox reaction to proton translocation, and thus conserves the redox energy in a proton gradient. This is NAD(P)H-quinone oxidoreductase subunit 1 from Prochlorococcus marinus (strain NATL2A).